The primary structure comprises 250 residues: 3-deoxy-manno-octulosonate cytidylyltransferase (250 aa).

Belongs to the KdsB family.

It localises to the cytoplasm. It carries out the reaction 3-deoxy-alpha-D-manno-oct-2-ulosonate + CTP = CMP-3-deoxy-beta-D-manno-octulosonate + diphosphate. Its pathway is nucleotide-sugar biosynthesis; CMP-3-deoxy-D-manno-octulosonate biosynthesis; CMP-3-deoxy-D-manno-octulosonate from 3-deoxy-D-manno-octulosonate and CTP: step 1/1. The protein operates within bacterial outer membrane biogenesis; lipopolysaccharide biosynthesis. In terms of biological role, activates KDO (a required 8-carbon sugar) for incorporation into bacterial lipopolysaccharide in Gram-negative bacteria. This is 3-deoxy-manno-octulosonate cytidylyltransferase from Yersinia enterocolitica serotype O:8 / biotype 1B (strain NCTC 13174 / 8081).